A 308-amino-acid chain; its full sequence is Exosporium protein A (308 aa).

The protein resides in the spore wall. This is Exosporium protein A from Clostridium sporogenes (strain ATCC 15579).